The following is a 315-amino-acid chain: Nucleotide-binding protein CGSHiEE_06315 (315 aa).

An ATP-binding site is contributed by 8–15; sequence GRSGAGKS. A GTP-binding site is contributed by 56–59; that stretch reads DIRN.

This sequence belongs to the RapZ-like family.

Displays ATPase and GTPase activities. This is Nucleotide-binding protein CGSHiEE_06315 from Haemophilus influenzae (strain PittEE).